Reading from the N-terminus, the 390-residue chain is Succinate--CoA ligase [ADP-forming] subunit beta (390 aa).

The ATP-grasp domain maps to 9-248 (KEILRRHKAN…ITEEDPLEVQ (240 aa)). ATP is bound by residues K50, 57 to 59 (GRG), E103, I106, and E111. The Mg(2+) site is built by N203 and D217. Residues N268 and 325–327 (GIV) contribute to the substrate site.

The protein belongs to the succinate/malate CoA ligase beta subunit family. Heterotetramer of two alpha and two beta subunits. It depends on Mg(2+) as a cofactor.

The catalysed reaction is succinate + ATP + CoA = succinyl-CoA + ADP + phosphate. It carries out the reaction GTP + succinate + CoA = succinyl-CoA + GDP + phosphate. Its pathway is carbohydrate metabolism; tricarboxylic acid cycle; succinate from succinyl-CoA (ligase route): step 1/1. Its function is as follows. Succinyl-CoA synthetase functions in the citric acid cycle (TCA), coupling the hydrolysis of succinyl-CoA to the synthesis of either ATP or GTP and thus represents the only step of substrate-level phosphorylation in the TCA. The beta subunit provides nucleotide specificity of the enzyme and binds the substrate succinate, while the binding sites for coenzyme A and phosphate are found in the alpha subunit. The sequence is that of Succinate--CoA ligase [ADP-forming] subunit beta from Leptospira borgpetersenii serovar Hardjo-bovis (strain JB197).